Consider the following 513-residue polypeptide: ATP synthase subunit alpha (513 aa).

171–178 (GDRQIGKT) is a binding site for ATP.

It belongs to the ATPase alpha/beta chains family. As to quaternary structure, F-type ATPases have 2 components, CF(1) - the catalytic core - and CF(0) - the membrane proton channel. CF(1) has five subunits: alpha(3), beta(3), gamma(1), delta(1), epsilon(1). CF(0) has three main subunits: a(1), b(2) and c(9-12). The alpha and beta chains form an alternating ring which encloses part of the gamma chain. CF(1) is attached to CF(0) by a central stalk formed by the gamma and epsilon chains, while a peripheral stalk is formed by the delta and b chains.

It is found in the cell membrane. The catalysed reaction is ATP + H2O + 4 H(+)(in) = ADP + phosphate + 5 H(+)(out). Its function is as follows. Produces ATP from ADP in the presence of a proton gradient across the membrane. The alpha chain is a regulatory subunit. The polypeptide is ATP synthase subunit alpha (Wolbachia pipientis subsp. Culex pipiens (strain wPip)).